We begin with the raw amino-acid sequence, 515 residues long: Bifunctional purine biosynthesis protein PurH (515 aa).

The 145-residue stretch at 1–145 (MTKRALISVS…KNHASVTVVV (145 aa)) folds into the MGS-like domain.

This sequence belongs to the PurH family.

The enzyme catalyses (6R)-10-formyltetrahydrofolate + 5-amino-1-(5-phospho-beta-D-ribosyl)imidazole-4-carboxamide = 5-formamido-1-(5-phospho-D-ribosyl)imidazole-4-carboxamide + (6S)-5,6,7,8-tetrahydrofolate. The catalysed reaction is IMP + H2O = 5-formamido-1-(5-phospho-D-ribosyl)imidazole-4-carboxamide. It functions in the pathway purine metabolism; IMP biosynthesis via de novo pathway; 5-formamido-1-(5-phospho-D-ribosyl)imidazole-4-carboxamide from 5-amino-1-(5-phospho-D-ribosyl)imidazole-4-carboxamide (10-formyl THF route): step 1/1. It participates in purine metabolism; IMP biosynthesis via de novo pathway; IMP from 5-formamido-1-(5-phospho-D-ribosyl)imidazole-4-carboxamide: step 1/1. This chain is Bifunctional purine biosynthesis protein PurH, found in Streptococcus gordonii (strain Challis / ATCC 35105 / BCRC 15272 / CH1 / DL1 / V288).